A 355-amino-acid chain; its full sequence is Probable protein phosphatase 2C 21 (355 aa).

Residues 23–329 (RFGLSSMQGW…DNMTIILVQF (307 aa)) form the PPM-type phosphatase domain. Mn(2+) contacts are provided by D57, G58, D272, and D320. Positions 329-355 (FKKPNPSETEPEDSKPEPSEDEPSSSS) are disordered.

Belongs to the PP2C family. Requires Mg(2+) as cofactor. Mn(2+) is required as a cofactor.

The enzyme catalyses O-phospho-L-seryl-[protein] + H2O = L-seryl-[protein] + phosphate. It catalyses the reaction O-phospho-L-threonyl-[protein] + H2O = L-threonyl-[protein] + phosphate. This is Probable protein phosphatase 2C 21 (PPC4-2) from Arabidopsis thaliana (Mouse-ear cress).